We begin with the raw amino-acid sequence, 70 residues long: Melittin (70 aa).

An N-terminal signal peptide occupies residues 1-21 (MKFLVNVALVFMVVYISFIYA). The propeptide at 22–43 (APEPEPAPEAEAEADAEADPEA) is removed by a dipeptidylpeptidase. The residue at position 44 (glycine 44) is an N-formylglycine; partial. Residue glutamine 69 is modified to Glutamine amide.

This sequence belongs to the melittin family. Monomer (in solution and for integration into membranes), homotetramer (in solution and potentially as a toroidal pore in membranes), and potenially homomultimer (as a toroidal pore in membranes). As to expression, expressed by the venom gland.

It is found in the secreted. The protein localises to the target cell membrane. In terms of biological role, main toxin of bee venom with strong hemolytic activity and antimicrobial activity. It has enhancing effects on bee venom phospholipase A2 activity. This amphipathic toxin binds to negatively charged membrane surface and forms pore by inserting into lipid bilayers inducing the leakage of ions and molecules and the enhancement of permeability that ultimately leads to cell lysis. It acts as a voltage-gated pore with higher selectivity for anions over cations. The ion conductance has been shown to be voltage-dependent. Self-association of melittin in membranes is promoted by high ionic strength, but not by the presence of negatively charged lipids. In vivo, intradermal injection into healthy human volunteers produce sharp pain sensation and an inflammatory response. It produces pain by activating primary nociceptor cells directly and indirectly due to its ability to activate plasma membrane phospholipase A2 and its pore-forming activity. In Apis cerana cerana (Oriental honeybee), this protein is Melittin (MELT).